The following is a 461-amino-acid chain: Cysteine--tRNA ligase (461 aa).

Position 30 (cysteine 30) interacts with Zn(2+). A 'HIGH' region motif is present at residues 32–42 (PTVYSYAHIGN). Residues cysteine 212, histidine 237, and glutamate 241 each coordinate Zn(2+). Positions 270-274 (KMSKS) match the 'KMSKS' region motif. Residue lysine 273 participates in ATP binding.

Belongs to the class-I aminoacyl-tRNA synthetase family. As to quaternary structure, monomer. Zn(2+) serves as cofactor.

The protein resides in the cytoplasm. The catalysed reaction is tRNA(Cys) + L-cysteine + ATP = L-cysteinyl-tRNA(Cys) + AMP + diphosphate. The chain is Cysteine--tRNA ligase from Maricaulis maris (strain MCS10) (Caulobacter maris).